The following is a 542-amino-acid chain: Glucans biosynthesis protein G (542 aa).

Residues 1–34 (MVSLLRCPSSKPYSSLICSLTLGAVVALSGVAYA) form the signal peptide.

It belongs to the OpgD/OpgG family.

The protein localises to the periplasm. Its pathway is glycan metabolism; osmoregulated periplasmic glucan (OPG) biosynthesis. Functionally, involved in the biosynthesis of osmoregulated periplasmic glucans (OPGs). This is Glucans biosynthesis protein G from Shewanella baltica (strain OS155 / ATCC BAA-1091).